A 513-amino-acid chain; its full sequence is Histidine ammonia-lyase (513 aa).

The 5-imidazolinone (Ala-Gly) cross-link spans 144–146 (ASG). S145 is subject to 2,3-didehydroalanine (Ser).

Belongs to the PAL/histidase family. Post-translationally, contains an active site 4-methylidene-imidazol-5-one (MIO), which is formed autocatalytically by cyclization and dehydration of residues Ala-Ser-Gly.

Its subcellular location is the cytoplasm. The catalysed reaction is L-histidine = trans-urocanate + NH4(+). It functions in the pathway amino-acid degradation; L-histidine degradation into L-glutamate; N-formimidoyl-L-glutamate from L-histidine: step 1/3. This Streptococcus pyogenes serotype M18 (strain MGAS8232) protein is Histidine ammonia-lyase.